An 83-amino-acid chain; its full sequence is Homeobox protein DLX-2 (83 aa).

Positions 1 to 14 (STATDSSYYTNQQH) are enriched in polar residues. Disordered regions lie at residues 1–27 (STATDSSYYTNQQHPAGGGGGGASPYA) and 63–83 (PYGTSSSPVNNEPDKEDLEPE).

The protein belongs to the distal-less homeobox family. In terms of assembly, interacts (via homeobox DNA-binding domain) with POU4F2; this interaction enhances retinal ganglion cell (RGC) differentiation.

The protein localises to the nucleus. Acts as a transcriptional activator. Activates transcription of CGA/alpha-GSU, via binding to the downstream activin regulatory element (DARE) in the gene promoter. Plays a role in terminal differentiation of interneurons, such as amacrine and bipolar cells in the developing retina. Likely to play a regulatory role in the development of the ventral forebrain. May play a role in craniofacial patterning and morphogenesis. The chain is Homeobox protein DLX-2 (Dlx2) from Rattus norvegicus (Rat).